The chain runs to 542 residues: Chaperonin GroEL (542 aa).

ATP contacts are provided by residues 29-32, 86-90, Gly-413, 476-478, and Asp-492; these read TLGP, DGTTT, and NAA.

It belongs to the chaperonin (HSP60) family. Forms a cylinder of 14 subunits composed of two heptameric rings stacked back-to-back. Interacts with the co-chaperonin GroES.

The protein localises to the cytoplasm. It carries out the reaction ATP + H2O + a folded polypeptide = ADP + phosphate + an unfolded polypeptide.. Its function is as follows. Together with its co-chaperonin GroES, plays an essential role in assisting protein folding. The GroEL-GroES system forms a nano-cage that allows encapsulation of the non-native substrate proteins and provides a physical environment optimized to promote and accelerate protein folding. The polypeptide is Chaperonin GroEL (Lactococcus lactis subsp. cremoris (strain SK11)).